We begin with the raw amino-acid sequence, 114 residues long: Holo-[acyl-carrier-protein] synthase (114 aa).

Residues Asp-8 and Glu-58 each coordinate Mg(2+).

This sequence belongs to the P-Pant transferase superfamily. AcpS family. The cofactor is Mg(2+).

The protein localises to the cytoplasm. The catalysed reaction is apo-[ACP] + CoA = holo-[ACP] + adenosine 3',5'-bisphosphate + H(+). Functionally, transfers the 4'-phosphopantetheine moiety from coenzyme A to a Ser of acyl-carrier-protein. This Mycoplasma genitalium (strain ATCC 33530 / DSM 19775 / NCTC 10195 / G37) (Mycoplasmoides genitalium) protein is Holo-[acyl-carrier-protein] synthase.